We begin with the raw amino-acid sequence, 194 residues long: Large ribosomal subunit protein bL9 (194 aa).

Over residues 156–167 (RGEDISSRREDQ) the composition is skewed to basic and acidic residues. The disordered stretch occupies residues 156 to 194 (RGEDISSRREDQDAAAEAIAAAGEFFDPDAQQDEEPEQQ). A compositionally biased stretch (acidic residues) spans 181–194 (FDPDAQQDEEPEQQ).

Belongs to the bacterial ribosomal protein bL9 family.

In terms of biological role, binds to the 23S rRNA. The sequence is that of Large ribosomal subunit protein bL9 from Rhodopseudomonas palustris (strain BisB5).